The sequence spans 84 residues: UPF0297 protein NT01CX_2279 (84 aa).

Belongs to the UPF0297 family.

The sequence is that of UPF0297 protein NT01CX_2279 from Clostridium novyi (strain NT).